The following is a 328-amino-acid chain: PDZ and LIM domain protein 1 (328 aa).

At T2 the chain carries N-acetylthreonine. One can recognise a PDZ domain in the interval 3-85; sequence TLQIVLQGPG…NMTLTVARSE (83 aa). Residues S90 and S130 each carry the phosphoserine modification. Y144 carries the post-translational modification Phosphotyrosine. One can recognise an LIM zinc-binding domain in the interval 257-316; that stretch reads PMCDKCGTGIVGVFVKLRERHRHPECYVCTDCGTNLKQKGHFFVEDQIYCEKHARERVTP. Positions 259, 262, 279, 282, 285, 288, 306, and 309 each coordinate Zn(2+). T315 carries the post-translational modification Phosphothreonine. The residue at position 320 (Y320) is a Phosphotyrosine.

In terms of assembly, interacts with ACTN1, ACTN2 and ACTN4. Interacts with PDLIM4.

Its subcellular location is the cytoplasm. It is found in the cytoskeleton. The protein localises to the myofibril. The protein resides in the sarcomere. It localises to the z line. Cytoskeletal protein that may act as an adapter that brings other proteins (like kinases) to the cytoskeleton. Involved in assembly, disassembly and directioning of stress fibers in fibroblasts. Required for the localization of ACTN1 and PALLD to stress fibers. Required for cell migration and in maintaining cell polarity of fibroblasts. In Bos taurus (Bovine), this protein is PDZ and LIM domain protein 1 (PDLIM1).